Reading from the N-terminus, the 307-residue chain is Serine/threonine-protein phosphatase 4 catalytic subunit (307 aa).

Ala2 carries the N-acetylalanine modification. Residues Asp54, His56, Asp82, and Asn114 each coordinate Mn(2+). His115 acts as the Proton donor in catalysis. Mn(2+) contacts are provided by His164 and His238. Leu307 is modified (leucine methyl ester).

It belongs to the PPP phosphatase family. PP-4 (PP-X) subfamily. As to quaternary structure, serine/threonine-protein phosphatase 4 (PP4) occurs in different assemblies of the catalytic and one or more regulatory subunits. Component of the PP4 complexes PPP4C-PPP4R1, PPP4C-PPP4R2, PPP4C-PPP4R2-PPP4R3A, PPP4C-PPP4R2-PPP4R3B and PPP4C-PPP4R4. The PPP4C-PPP4R2 complex appears to be a tetramer composed of 2 molecules of PPP4C and 2 molecules of PPP4R2. Interacts with REL, NFKB1/p50 and RELA. Interacts with SMN1 and GEMIN4. Interacts with IRS4 (phosphorylated). Interacts with SMEK1/PPP4R3A; the interaction requires PP4R2. Interacts with HDAC3. Mn(2+) serves as cofactor. In terms of processing, methylation at the C-terminal Leu-307 is critical for interactions with regulatory subunits and functions in DNA repair.

It localises to the cytoplasm. The protein localises to the nucleus. It is found in the cytoskeleton. The protein resides in the microtubule organizing center. Its subcellular location is the centrosome. It carries out the reaction O-phospho-L-seryl-[protein] + H2O = L-seryl-[protein] + phosphate. It catalyses the reaction O-phospho-L-threonyl-[protein] + H2O = L-threonyl-[protein] + phosphate. Protein phosphatase that is involved in many processes such as microtubule organization at centrosomes, maturation of spliceosomal snRNPs, apoptosis, DNA repair, tumor necrosis factor (TNF)-alpha signaling, activation of c-Jun N-terminal kinase MAPK8, regulation of histone acetylation, DNA damage checkpoint signaling, NF-kappa-B activation and cell migration. The PPP4C-PPP4R1 PP4 complex may play a role in dephosphorylation and regulation of HDAC3. The PPP4C-PPP4R2-PPP4R3A PP4 complex specifically dephosphorylates H2AX phosphorylated on Ser-140 (gamma-H2AX) generated during DNA replication and required for DNA double strand break repair. Dephosphorylates NDEL1 at CDK1 phosphorylation sites and negatively regulates CDK1 activity in interphase. In response to DNA damage, catalyzes RPA2 dephosphorylation, an essential step for DNA repair since it allows the efficient RPA2-mediated recruitment of RAD51 to chromatin. This Homo sapiens (Human) protein is Serine/threonine-protein phosphatase 4 catalytic subunit (PPP4C).